Here is a 473-residue protein sequence, read N- to C-terminus: Trigger factor (473 aa).

The PPIase FKBP-type domain occupies 171-256 (GDRVTIDFVG…VTKIQAAGEA (86 aa)). The disordered stretch occupies residues 439–473 (KEALFADEDGDDTTGGKPADKAEAKDESKTEAKAD). Residues 456 to 473 (PADKAEAKDESKTEAKAD) show a composition bias toward basic and acidic residues.

Belongs to the FKBP-type PPIase family. Tig subfamily.

The protein localises to the cytoplasm. It catalyses the reaction [protein]-peptidylproline (omega=180) = [protein]-peptidylproline (omega=0). Functionally, involved in protein export. Acts as a chaperone by maintaining the newly synthesized protein in an open conformation. Functions as a peptidyl-prolyl cis-trans isomerase. The protein is Trigger factor of Methylobacterium radiotolerans (strain ATCC 27329 / DSM 1819 / JCM 2831 / NBRC 15690 / NCIMB 10815 / 0-1).